The following is a 233-amino-acid chain: Large ribosomal subunit protein uL1 (233 aa).

The protein belongs to the universal ribosomal protein uL1 family. In terms of assembly, part of the 50S ribosomal subunit.

Its function is as follows. Binds directly to 23S rRNA. The L1 stalk is quite mobile in the ribosome, and is involved in E site tRNA release. Functionally, protein L1 is also a translational repressor protein, it controls the translation of the L11 operon by binding to its mRNA. This chain is Large ribosomal subunit protein uL1, found in Shewanella sp. (strain MR-4).